A 232-amino-acid polypeptide reads, in one-letter code: Phosphoribosylformylglycinamidine synthase subunit PurQ (232 aa).

Positions 2 to 232 (RIGVITFPGS…SVVRSTLVEA (231 aa)) constitute a Glutamine amidotransferase type-1 domain. Catalysis depends on cysteine 85, which acts as the Nucleophile. Catalysis depends on residues histidine 194 and glutamate 196.

As to quaternary structure, part of the FGAM synthase complex composed of 1 PurL, 1 PurQ and 2 PurS subunits.

It localises to the cytoplasm. It catalyses the reaction N(2)-formyl-N(1)-(5-phospho-beta-D-ribosyl)glycinamide + L-glutamine + ATP + H2O = 2-formamido-N(1)-(5-O-phospho-beta-D-ribosyl)acetamidine + L-glutamate + ADP + phosphate + H(+). The enzyme catalyses L-glutamine + H2O = L-glutamate + NH4(+). The protein operates within purine metabolism; IMP biosynthesis via de novo pathway; 5-amino-1-(5-phospho-D-ribosyl)imidazole from N(2)-formyl-N(1)-(5-phospho-D-ribosyl)glycinamide: step 1/2. In terms of biological role, part of the phosphoribosylformylglycinamidine synthase complex involved in the purines biosynthetic pathway. Catalyzes the ATP-dependent conversion of formylglycinamide ribonucleotide (FGAR) and glutamine to yield formylglycinamidine ribonucleotide (FGAM) and glutamate. The FGAM synthase complex is composed of three subunits. PurQ produces an ammonia molecule by converting glutamine to glutamate. PurL transfers the ammonia molecule to FGAR to form FGAM in an ATP-dependent manner. PurS interacts with PurQ and PurL and is thought to assist in the transfer of the ammonia molecule from PurQ to PurL. The polypeptide is Phosphoribosylformylglycinamidine synthase subunit PurQ (Leifsonia xyli subsp. xyli (strain CTCB07)).